We begin with the raw amino-acid sequence, 146 residues long: Probable glycine cleavage system H protein 1, mitochondrial (146 aa).

The transit peptide at Met1 to Asp30 directs the protein to the mitochondrion. The region spanning Asn41–Lys123 is the Lipoyl-binding domain. Lys82 carries the post-translational modification N6-lipoyllysine.

It belongs to the GcvH family. As to quaternary structure, the glycine cleavage system is composed of four proteins: P, T, L and H. (R)-lipoate serves as cofactor.

Its subcellular location is the mitochondrion. The glycine cleavage system catalyzes the degradation of glycine. The H protein shuttles the methylamine group of glycine from the P protein to the T protein. In Dictyostelium discoideum (Social amoeba), this protein is Probable glycine cleavage system H protein 1, mitochondrial (gcvH1).